Here is a 557-residue protein sequence, read N- to C-terminus: Urocanate hydratase (557 aa).

The interval 1–20 is disordered; it reads MSNPRHNEREVRSPRGDELN. NAD(+)-binding positions include 52 to 53, Q130, 176 to 178, E196, R201, 242 to 243, 263 to 267, 273 to 274, and Y322; these read GG, GMG, NA, QTSAH, and YL. C410 is an active-site residue. G492 contributes to the NAD(+) binding site.

It belongs to the urocanase family. NAD(+) is required as a cofactor.

The protein resides in the cytoplasm. The enzyme catalyses 4-imidazolone-5-propanoate = trans-urocanate + H2O. It functions in the pathway amino-acid degradation; L-histidine degradation into L-glutamate; N-formimidoyl-L-glutamate from L-histidine: step 2/3. Catalyzes the conversion of urocanate to 4-imidazolone-5-propionate. The polypeptide is Urocanate hydratase (Brucella anthropi (strain ATCC 49188 / DSM 6882 / CCUG 24695 / JCM 21032 / LMG 3331 / NBRC 15819 / NCTC 12168 / Alc 37) (Ochrobactrum anthropi)).